The following is a 493-amino-acid chain: NADH-quinone oxidoreductase subunit N 2 (493 aa).

14 helical membrane passes run 16–36, 45–65, 87–107, 119–139, 141–161, 176–196, 219–239, 258–278, 285–305, 313–333, 340–360, 385–405, 421–441, and 464–484; these read IIPA…DFLI, FLLI…FRQQ, GFAI…AIVS, GEYY…ATGT, LITL…MVGF, LLLG…MYGI, VFLA…AVPF, LSVA…LGPL, WEPL…LAAI, LLAY…VAGN, IAVY…VIIA, AFLM…AGFL, GLAI…FKIV, and CALA…EPFL.

This sequence belongs to the complex I subunit 2 family. In terms of assembly, NDH-1 is composed of 14 different subunits. Subunits NuoA, H, J, K, L, M, N constitute the membrane sector of the complex.

The protein localises to the cell inner membrane. The catalysed reaction is a quinone + NADH + 5 H(+)(in) = a quinol + NAD(+) + 4 H(+)(out). Its function is as follows. NDH-1 shuttles electrons from NADH, via FMN and iron-sulfur (Fe-S) centers, to quinones in the respiratory chain. The immediate electron acceptor for the enzyme in this species is believed to be ubiquinone. Couples the redox reaction to proton translocation (for every two electrons transferred, four hydrogen ions are translocated across the cytoplasmic membrane), and thus conserves the redox energy in a proton gradient. The sequence is that of NADH-quinone oxidoreductase subunit N 2 from Solibacter usitatus (strain Ellin6076).